Consider the following 1108-residue polypeptide: Retinal guanylyl cyclase 2 (1108 aa).

The N-terminal stretch at Met-1 to Ala-50 is a signal peptide. At Leu-51–Ala-469 the chain is on the extracellular side. An intrachain disulfide couples Cys-104 to Cys-132. The helical transmembrane segment at Met-470 to Ile-490 threads the bilayer. Residues Arg-491–Pro-1108 lie on the Cytoplasmic side of the membrane. In terms of domain architecture, Protein kinase spans Phe-532–Phe-812. Residues Thr-884 to Glu-1014 enclose the Guanylate cyclase domain.

It belongs to the adenylyl cyclase class-4/guanylyl cyclase family. Homodimer. Interacts with RD3; promotes the exit of GUCY2F from the endoplasmic reticulum and its trafficking to the photoreceptor outer segments. In terms of processing, there are 9 conserved cysteine residues in sensory guanylate cyclases, 6 in the extracellular domain, which may be involved in intra- or interchain disulfide bonds. Retina.

It localises to the membrane. The protein localises to the photoreceptor outer segment membrane. The catalysed reaction is GTP = 3',5'-cyclic GMP + diphosphate. Its activity is regulated as follows. Activated by GUCA1B when free calcium ions concentration is low, and inhibited by GUCA1B when free calcium ions concentration is high. Inhibited by RD3. Functionally, responsible for the synthesis of cyclic GMP (cGMP) in rods and cones of photoreceptors. Plays an essential role in phototransduction, by mediating cGMP replenishment. May also participate in the trafficking of membrane-asociated proteins to the photoreceptor outer segment membrane. In Mus musculus (Mouse), this protein is Retinal guanylyl cyclase 2.